Here is a 397-residue protein sequence, read N- to C-terminus: DNA replication and repair protein RecF (397 aa).

30-37 (GPNGQGKT) is an ATP binding site.

It belongs to the RecF family.

Its subcellular location is the cytoplasm. In terms of biological role, the RecF protein is involved in DNA metabolism; it is required for DNA replication and normal SOS inducibility. RecF binds preferentially to single-stranded, linear DNA. It also seems to bind ATP. The polypeptide is DNA replication and repair protein RecF (Beutenbergia cavernae (strain ATCC BAA-8 / DSM 12333 / CCUG 43141 / JCM 11478 / NBRC 16432 / NCIMB 13614 / HKI 0122)).